Reading from the N-terminus, the 864-residue chain is Putative Gly-rich membrane protein Bcell_0380 (864 aa).

Residues 7–27 traverse the membrane as a helical segment; that stretch reads ITFLAAFICIIFVIYAIYHSV. The segment at 372–399 is disordered; the sequence is TVENSFYDEDTTGQSDTGKGTPMSTADM. Polar residues predominate over residues 383 to 395; that stretch reads TGQSDTGKGTPMS.

Its subcellular location is the cell membrane. The polypeptide is Putative Gly-rich membrane protein Bcell_0380 (Evansella cellulosilytica (strain ATCC 21833 / DSM 2522 / FERM P-1141 / JCM 9156 / N-4) (Bacillus cellulosilyticus)).